A 739-amino-acid polypeptide reads, in one-letter code: Phosphoribosylformylglycinamidine synthase subunit PurL (739 aa).

Histidine 49 is an active-site residue. ATP contacts are provided by tyrosine 52 and lysine 91. Glutamate 93 lines the Mg(2+) pocket. Substrate-binding positions include 94–97 (SHNH) and arginine 116. Histidine 95 serves as the catalytic Proton acceptor. Aspartate 117 is a Mg(2+) binding site. Substrate is bound at residue glutamine 240. Mg(2+) is bound at residue aspartate 268. 312–314 (ESQ) lines the substrate pocket. The ATP site is built by aspartate 493 and glycine 530. Residue asparagine 531 participates in Mg(2+) binding. Substrate is bound at residue serine 533.

The protein belongs to the FGAMS family. In terms of assembly, monomer. Part of the FGAM synthase complex composed of 1 PurL, 1 PurQ and 2 PurS subunits.

Its subcellular location is the cytoplasm. It carries out the reaction N(2)-formyl-N(1)-(5-phospho-beta-D-ribosyl)glycinamide + L-glutamine + ATP + H2O = 2-formamido-N(1)-(5-O-phospho-beta-D-ribosyl)acetamidine + L-glutamate + ADP + phosphate + H(+). It functions in the pathway purine metabolism; IMP biosynthesis via de novo pathway; 5-amino-1-(5-phospho-D-ribosyl)imidazole from N(2)-formyl-N(1)-(5-phospho-D-ribosyl)glycinamide: step 1/2. In terms of biological role, part of the phosphoribosylformylglycinamidine synthase complex involved in the purines biosynthetic pathway. Catalyzes the ATP-dependent conversion of formylglycinamide ribonucleotide (FGAR) and glutamine to yield formylglycinamidine ribonucleotide (FGAM) and glutamate. The FGAM synthase complex is composed of three subunits. PurQ produces an ammonia molecule by converting glutamine to glutamate. PurL transfers the ammonia molecule to FGAR to form FGAM in an ATP-dependent manner. PurS interacts with PurQ and PurL and is thought to assist in the transfer of the ammonia molecule from PurQ to PurL. This chain is Phosphoribosylformylglycinamidine synthase subunit PurL, found in Parvibaculum lavamentivorans (strain DS-1 / DSM 13023 / NCIMB 13966).